Consider the following 579-residue polypeptide: Putative fatty-acid--CoA ligase fadD21 (579 aa).

This sequence belongs to the ATP-dependent AMP-binding enzyme family.

The protein is Putative fatty-acid--CoA ligase fadD21 (fadD21) of Mycobacterium leprae (strain TN).